Reading from the N-terminus, the 117-residue chain is uncharacterized protein (117 aa).

A helical transmembrane segment spans residues 57–77 (LGFPLGLLVFLHSLIVARFFV).

Its subcellular location is the membrane. This is an uncharacterized protein from Schizosaccharomyces pombe (strain 972 / ATCC 24843) (Fission yeast).